The chain runs to 492 residues: ATP synthase subunit beta, chloroplastic (492 aa).

Residue 170 to 177 (GGAGVGKT) coordinates ATP.

Belongs to the ATPase alpha/beta chains family. In terms of assembly, F-type ATPases have 2 components, CF(1) - the catalytic core - and CF(0) - the membrane proton channel. CF(1) has five subunits: alpha(3), beta(3), gamma(1), delta(1), epsilon(1). CF(0) has four main subunits: a(1), b(1), b'(1) and c(9-12).

The protein resides in the plastid. It localises to the chloroplast thylakoid membrane. The enzyme catalyses ATP + H2O + 4 H(+)(in) = ADP + phosphate + 5 H(+)(out). Produces ATP from ADP in the presence of a proton gradient across the membrane. The catalytic sites are hosted primarily by the beta subunits. The chain is ATP synthase subunit beta, chloroplastic from Huperzia lucidula (Shining clubmoss).